We begin with the raw amino-acid sequence, 345 residues long: Fructose-bisphosphate aldolase (345 aa).

A D-glyceraldehyde 3-phosphate-binding site is contributed by Ser53. The Proton donor role is filled by Asp95. Positions 96, 131, 161, and 212 each coordinate Zn(2+). Gly213 is a dihydroxyacetone phosphate binding site. Residue His252 coordinates Zn(2+). Dihydroxyacetone phosphate-binding positions include 253-255 (GGS) and 274-277 (NVDT).

This sequence belongs to the class II fructose-bisphosphate aldolase family. Requires Zn(2+) as cofactor.

The enzyme catalyses beta-D-fructose 1,6-bisphosphate = D-glyceraldehyde 3-phosphate + dihydroxyacetone phosphate. Its pathway is carbohydrate degradation; glycolysis; D-glyceraldehyde 3-phosphate and glycerone phosphate from D-glucose: step 4/4. Its function is as follows. Catalyzes the aldol condensation of dihydroxyacetone phosphate (DHAP or glycerone-phosphate) with glyceraldehyde 3-phosphate (G3P) to form fructose 1,6-bisphosphate (FBP) in gluconeogenesis and the reverse reaction in glycolysis. This chain is Fructose-bisphosphate aldolase (fba), found in Mycobacterium leprae (strain TN).